A 483-amino-acid chain; its full sequence is UDP-glycosyltransferase 85C1 (483 aa).

Residues S304, 360–361 (WC), 378–386 (HCGWGSIIE), and 400–403 (IGDQ) each bind UDP-alpha-D-glucose.

It belongs to the UDP-glycosyltransferase family.

Functionally, may glycosylate diterpenes or flavonols in leaves. This Stevia rebaudiana (Stevia) protein is UDP-glycosyltransferase 85C1.